Reading from the N-terminus, the 333-residue chain is Protein-methionine-sulfoxide reductase catalytic subunit MsrP (333 aa).

The tat-type signal signal peptide spans 1–43 (MHKHRKPTEADVTPESLFYQRRRVLKALGISAAALSLPLSAQA). Residues N87, 90–91 (YE), C145, T180, N232, R237, and 248–250 (NIK) contribute to the Mo-molybdopterin site.

It belongs to the MsrP family. As to quaternary structure, heterodimer of a catalytic subunit (MsrP) and a heme-binding subunit (MsrQ). Mo-molybdopterin is required as a cofactor. Predicted to be exported by the Tat system. The position of the signal peptide cleavage has not been experimentally proven.

It localises to the periplasm. It catalyses the reaction L-methionyl-[protein] + a quinone + H2O = L-methionyl-(S)-S-oxide-[protein] + a quinol. The enzyme catalyses L-methionyl-[protein] + a quinone + H2O = L-methionyl-(R)-S-oxide-[protein] + a quinol. In terms of biological role, part of the MsrPQ system that repairs oxidized periplasmic proteins containing methionine sulfoxide residues (Met-O), using respiratory chain electrons. Thus protects these proteins from oxidative-stress damage caused by reactive species of oxygen and chlorine generated by the host defense mechanisms. MsrPQ is essential for the maintenance of envelope integrity under bleach stress, rescuing a wide series of structurally unrelated periplasmic proteins from methionine oxidation. The catalytic subunit MsrP is non-stereospecific, being able to reduce both (R-) and (S-) diastereoisomers of methionine sulfoxide. The protein is Protein-methionine-sulfoxide reductase catalytic subunit MsrP of Pectobacterium atrosepticum (strain SCRI 1043 / ATCC BAA-672) (Erwinia carotovora subsp. atroseptica).